A 389-amino-acid polypeptide reads, in one-letter code: Na(+)/H(+) antiporter NhaA (389 aa).

11 helical membrane passes run 17-37 (ILLL…LAGL), 59-79 (LLLW…GLEV), 95-115 (SLPT…YLLF), 124-144 (AGWA…MALL), 154-174 (VFLL…IALF), 177-197 (TDLS…LVAL), 213-233 (LVLW…GVII), 261-281 (FLIL…NMSL), 287-307 (PVPV…VMLF), 328-348 (IAPV…IASL), and 363-383 (LGTL…LSKV).

It belongs to the NhaA Na(+)/H(+) (TC 2.A.33) antiporter family.

It is found in the cell inner membrane. The enzyme catalyses Na(+)(in) + 2 H(+)(out) = Na(+)(out) + 2 H(+)(in). In terms of biological role, na(+)/H(+) antiporter that extrudes sodium in exchange for external protons. This chain is Na(+)/H(+) antiporter NhaA, found in Shewanella sp. (strain MR-7).